A 1323-amino-acid chain; its full sequence is Receptor tyrosine-protein kinase let-23 (1323 aa).

Positions 1–20 (MRYPPSIGSILLIIPIFLTF) are cleaved as a signal peptide. Over 21 to 818 (FGNSNAQLWK…DIASRQRKTR (798 aa)) the chain is Extracellular. N-linked (GlcNAc...) asparagine glycans are attached at residues Asn-91 and Asn-169. Disulfide bonds link Cys-220-Cys-228, Cys-224-Cys-236, Cys-244-Cys-251, Cys-248-Cys-262, Cys-263-Cys-271, Cys-267-Cys-279, Cys-282-Cys-291, Cys-295-Cys-322, Cys-326-Cys-337, Cys-341-Cys-356, and Cys-359-Cys-364. Asn-255 carries N-linked (GlcNAc...) asparagine glycosylation. Residue Asn-376 is glycosylated (N-linked (GlcNAc...) asparagine). 20 disulfide bridges follow: Cys-520/Cys-529, Cys-524/Cys-537, Cys-540/Cys-549, Cys-553/Cys-567, Cys-570/Cys-577, Cys-574/Cys-585, Cys-588/Cys-604, Cys-608/Cys-620, Cys-623/Cys-632, Cys-627/Cys-644, Cys-647/Cys-660, Cys-670/Cys-693, Cys-696/Cys-703, Cys-700/Cys-715, Cys-717/Cys-731, Cys-735/Cys-750, Cys-753/Cys-763, Cys-757/Cys-771, Cys-774/Cys-787, and Cys-791/Cys-805. Residue Asn-561 is glycosylated (N-linked (GlcNAc...) asparagine). N-linked (GlcNAc...) asparagine glycosylation is present at Asn-655. A glycan (N-linked (GlcNAc...) asparagine) is linked at Asn-746. An N-linked (GlcNAc...) asparagine glycan is attached at Asn-776. A helical transmembrane segment spans residues 819-839 (MVIIGSVLFGFAVMFLFILLV). At 840–1323 (YWRCQRIGKK…EEVSQKETCL (484 aa)) the chain is on the cytoplasmic side. Positions 885–1152 (TKLDKKLGAG…EFCKVPQLFL (268 aa)) constitute a Protein kinase domain. Residues 891–899 (LGAGAFGTV) and Lys-919 each bind ATP. The active-site Proton acceptor is Asp-1010. Residues 1265 to 1289 (GQTELSPSNGDYYNQPNTPSSSSGY) are compositionally biased toward polar residues. Residues 1265-1323 (GQTELSPSNGDYYNQPNTPSSSSGYYNEPHLKTKKPETSEEAEAVQYENEEVSQKETCL) are disordered. Positions 1293-1302 (PHLKTKKPET) are enriched in basic and acidic residues. Residues 1303–1315 (SEEAEAVQYENEE) show a composition bias toward acidic residues.

It belongs to the protein kinase superfamily. Tyr protein kinase family. EGF receptor subfamily. As to expression, expressed in vulval precursor cells (at protein level). Expressed in ALA neurons, 2 ventral head neurons, a single neuron in the tail, pharyngeal-intestinal valve and posterior arcade epithelial cells.

Its subcellular location is the apical cell membrane. It is found in the basolateral cell membrane. It catalyses the reaction L-tyrosyl-[protein] + ATP = O-phospho-L-tyrosyl-[protein] + ADP + H(+). In terms of biological role, tyrosine-protein kinase receptor which, upon binding ligand lin-3, activates 2 signaling cascades: the let-60/Ras and MAP kinase signaling pathway and the let-60-independent phospholipase C-mediated Ca(2+) signaling pathway. Each pathway regulates distinct functions. By activating let-60/Ras, regulates larval development, induction of vulva cell precursors during vulva development, male spicule formation and posterior development of the epidermis. Probably by activating phospholipase plc-3 and inositol 1,4,5-trisphosphate receptor itr-1 signaling cascade downstream of ligand lin-3, plays a role in ovulation by promoting ovulatory gonadal sheath cell contractions. Probably by regulating neuronal transmission in ALA neurons, mediates, independently of let-60/Ras, the decrease in pharyngeal pumping and locomotion during the quiescent state that precedes each larval molt, downstream of lin-3 and upstream of plc-3. The protein is Receptor tyrosine-protein kinase let-23 of Caenorhabditis elegans.